We begin with the raw amino-acid sequence, 436 residues long: Glutamate-1-semialdehyde 2,1-aminomutase 2 (436 aa).

Position 271 is an N6-(pyridoxal phosphate)lysine (Lys-271).

The protein belongs to the class-III pyridoxal-phosphate-dependent aminotransferase family. HemL subfamily. Homodimer. It depends on pyridoxal 5'-phosphate as a cofactor.

The protein resides in the cytoplasm. The catalysed reaction is (S)-4-amino-5-oxopentanoate = 5-aminolevulinate. It functions in the pathway porphyrin-containing compound metabolism; protoporphyrin-IX biosynthesis; 5-aminolevulinate from L-glutamyl-tRNA(Glu): step 2/2. The sequence is that of Glutamate-1-semialdehyde 2,1-aminomutase 2 from Exiguobacterium sibiricum (strain DSM 17290 / CCUG 55495 / CIP 109462 / JCM 13490 / 255-15).